The sequence spans 299 residues: MAYERFTSAITLLLHWRNRLDPYWKLARGDRPVGFLLLLWPTWWALWLAADGVPPWWTLCVFTTGIWLTRSAGCVINDYTDRWLDPHVERTCTRPLVTGTVSPRNALLMFATLMLIAFGLVLTMNQLTVLLSVAGLFLAMTYPYLKRYTHLPQVYLGLAFGWGIPMAFAAIQGKVPTLAWLLYIANILWTTAYDTWYAMVDRDDDIKMGAKSIAILFAELDLVVQGVLYTLMLLTLCLVGLRATLSHTYWISLISAVALIGYQFIIARRREPTACFRAFMHNNWVGMTIFAGIALATTH.

8 helical membrane-spanning segments follow: residues 33-53, 56-76, 107-127, 151-171, 180-200, 213-233, 247-267, and 278-298; these read VGFLLLLWPTWWALWLAADGV, WWTLCVFTTGIWLTRSAGCVI, LLMFATLMLIAFGLVLTMNQL, LPQVYLGLAFGWGIPMAFAAI, WLLYIANILWTTAYDTWYAMV, IAILFAELDLVVQGVLYTLML, HTYWISLISAVALIGYQFIIA, and AFMHNNWVGMTIFAGIALATT.

It belongs to the UbiA prenyltransferase family. The cofactor is Mg(2+).

It localises to the cell inner membrane. The catalysed reaction is all-trans-octaprenyl diphosphate + 4-hydroxybenzoate = 4-hydroxy-3-(all-trans-octaprenyl)benzoate + diphosphate. It functions in the pathway cofactor biosynthesis; ubiquinone biosynthesis. In terms of biological role, catalyzes the prenylation of para-hydroxybenzoate (PHB) with an all-trans polyprenyl group. Mediates the second step in the final reaction sequence of ubiquinone-8 (UQ-8) biosynthesis, which is the condensation of the polyisoprenoid side chain with PHB, generating the first membrane-bound Q intermediate 3-octaprenyl-4-hydroxybenzoate. The protein is 4-hydroxybenzoate octaprenyltransferase of Xylella fastidiosa (strain M12).